A 306-amino-acid chain; its full sequence is Ornithine carbamoyltransferase (306 aa).

Carbamoyl phosphate-binding positions include 51-54 (STRT), Gln78, Arg102, and 129-132 (HPVQ). Residues Asn159, Asp223, and 227-228 (SM) contribute to the L-ornithine site. Carbamoyl phosphate-binding positions include 263 to 264 (CL) and Arg291.

Belongs to the aspartate/ornithine carbamoyltransferase superfamily. OTCase family.

Its subcellular location is the cytoplasm. The enzyme catalyses carbamoyl phosphate + L-ornithine = L-citrulline + phosphate + H(+). The protein operates within amino-acid biosynthesis; L-arginine biosynthesis; L-arginine from L-ornithine and carbamoyl phosphate: step 1/3. In terms of biological role, reversibly catalyzes the transfer of the carbamoyl group from carbamoyl phosphate (CP) to the N(epsilon) atom of ornithine (ORN) to produce L-citrulline. The protein is Ornithine carbamoyltransferase of Sulfurovum sp. (strain NBC37-1).